Reading from the N-terminus, the 31-residue chain is Cytochrome b6-f complex subunit 6 (31 aa).

A helical transmembrane segment spans residues 3-23; sequence ILISYFCFLLIFFLFTLILFF.

Belongs to the PetL family. As to quaternary structure, the 4 large subunits of the cytochrome b6-f complex are cytochrome b6, subunit IV (17 kDa polypeptide, PetD), cytochrome f and the Rieske protein, while the 4 small subunits are PetG, PetL, PetM and PetN. The complex functions as a dimer.

It is found in the plastid. The protein localises to the chloroplast thylakoid membrane. Its function is as follows. Component of the cytochrome b6-f complex, which mediates electron transfer between photosystem II (PSII) and photosystem I (PSI), cyclic electron flow around PSI, and state transitions. PetL is important for photoautotrophic growth as well as for electron transfer efficiency and stability of the cytochrome b6-f complex. In Gnetum parvifolium (Small-leaved jointfir), this protein is Cytochrome b6-f complex subunit 6.